A 391-amino-acid chain; its full sequence is Leucine aminopeptidase 1 (391 aa).

The signal sequence occupies residues 1–19; it reads MKLSIALALGATASTGVLA. Residues 20 to 91 constitute a propeptide that is removed on maturation; it reads AVVPQQEPLI…YPTLHAGSYV (72 aa). Residue N183 is glycosylated (N-linked (GlcNAc...) asparagine). Residues H191 and D210 each coordinate Zn(2+). N235 carries an N-linked (GlcNAc...) asparagine glycan. Residues E249 and D276 each contribute to the Zn(2+) site. C325 and C329 form a disulfide bridge. Position 358 (H358) interacts with Zn(2+).

This sequence belongs to the peptidase M28 family. M28E subfamily. As to quaternary structure, monomer. Zn(2+) serves as cofactor.

Its subcellular location is the secreted. Its function is as follows. Extracellular aminopeptidase that allows assimilation of proteinaceous substrates. The chain is Leucine aminopeptidase 1 (lap1) from Aspergillus niger (strain ATCC MYA-4892 / CBS 513.88 / FGSC A1513).